A 90-amino-acid polypeptide reads, in one-letter code: uncharacterized protein (90 aa).

The next 2 membrane-spanning stretches (helical) occupy residues 17–37 and 55–75; these read ILSM…IYLV and ICFG…WGIA.

Its subcellular location is the membrane. This is an uncharacterized protein from Schizosaccharomyces pombe (strain 972 / ATCC 24843) (Fission yeast).